The chain runs to 162 residues: Heat shock protein beta-6 (162 aa).

Positions 1–72 (MEIRVPVQPS…PTAQVPTDPG (72 aa)) are involved in stabilization of the HSPB1:HSBP6 heterodimer. At Ser16 the chain carries Phosphoserine. Gln31 participates in a covalent cross-link: Isoglutamyl lysine isopeptide (Gln-Lys) (interchain with K-162). A sHSP domain is found at 56–162 (RAPSVALPTA…ASLPSPPAAK (107 aa)). Position 66 is a deamidated glutamine (Gln66). Ser157 carries the post-translational modification Phosphoserine. Lys162 participates in a covalent cross-link: Isoglutamyl lysine isopeptide (Lys-Gln) (interchain with Q-31).

The protein belongs to the small heat shock protein (HSP20) family. In terms of assembly, homodimer. Small heat shock proteins form high molecular mass oligomers containing variable number of monomers; these oligomers display a very flexible quaternary structure easily exchanging their subunits. Heterooligomer with HSPB1; formed through oligomerization of HSPB1:HSBP6 dimers; subunit exchange leads to formation of at least two different heterooligomeric complexes, differing in variable quantities of HSPB1 and HSPB6 homodimers in addition to HSPB1:HSPB6 heterodimers. Heterooligomer with CRYAB; large heterooligomers consist of CRYAB homodimers and HSPB5:HSPB6 heterodimers but lacking HSPB6 homodimers. Interacts with BAG3. Interacts (phosphorylated) with YWHAZ. Interacts with PDE4A and PDE4D; required for maintenance of the non-phosphorylated state of HSPB6 under basal conditions. Interacts with KDR. Interacts with PRKD1. The N-terminus is blocked. Post-translationally, phosphorylated at Ser-16 by PKA and probably PKD1K; required to protect cardiomyocytes from apoptosis. In terms of tissue distribution, widely expressed. High expression in muscle tissues.

It localises to the cytoplasm. It is found in the nucleus. Its subcellular location is the secreted. Small heat shock protein which functions as a molecular chaperone probably maintaining denatured proteins in a folding-competent state. Seems to have versatile functions in various biological processes. Plays a role in regulating muscle function such as smooth muscle vasorelaxation and cardiac myocyte contractility. May regulate myocardial angiogenesis implicating KDR. Overexpression mediates cardioprotection and angiogenesis after induced damage. Stabilizes monomeric YWHAZ thereby supporting YWHAZ chaperone-like activity. In Rattus norvegicus (Rat), this protein is Heat shock protein beta-6 (Hspb6).